The primary structure comprises 131 residues: Small ribosomal subunit protein bS6 (131 aa).

Residue K93 is modified to N6-acetyllysine. Positions 98–131 (EASPMVKAKDERRERRDDFANETADDAEAGDSEE) are disordered. Residues 104 to 116 (KAKDERRERRDDF) show a composition bias toward basic and acidic residues. Residues 120-131 (TADDAEAGDSEE) are compositionally biased toward acidic residues.

This sequence belongs to the bacterial ribosomal protein bS6 family.

Functionally, binds together with bS18 to 16S ribosomal RNA. The chain is Small ribosomal subunit protein bS6 from Escherichia fergusonii (strain ATCC 35469 / DSM 13698 / CCUG 18766 / IAM 14443 / JCM 21226 / LMG 7866 / NBRC 102419 / NCTC 12128 / CDC 0568-73).